The sequence spans 371 residues: UDP-N-acetylglucosamine--N-acetylmuramyl-(pentapeptide) pyrophosphoryl-undecaprenol N-acetylglucosamine transferase (371 aa).

UDP-N-acetyl-alpha-D-glucosamine is bound by residues 10–12 (TGG), asparagine 124, arginine 166, serine 196, and glutamine 301.

The protein belongs to the glycosyltransferase 28 family. MurG subfamily.

It is found in the cell membrane. It carries out the reaction di-trans,octa-cis-undecaprenyl diphospho-N-acetyl-alpha-D-muramoyl-L-alanyl-D-glutamyl-meso-2,6-diaminopimeloyl-D-alanyl-D-alanine + UDP-N-acetyl-alpha-D-glucosamine = di-trans,octa-cis-undecaprenyl diphospho-[N-acetyl-alpha-D-glucosaminyl-(1-&gt;4)]-N-acetyl-alpha-D-muramoyl-L-alanyl-D-glutamyl-meso-2,6-diaminopimeloyl-D-alanyl-D-alanine + UDP + H(+). It participates in cell wall biogenesis; peptidoglycan biosynthesis. Cell wall formation. Catalyzes the transfer of a GlcNAc subunit on undecaprenyl-pyrophosphoryl-MurNAc-pentapeptide (lipid intermediate I) to form undecaprenyl-pyrophosphoryl-MurNAc-(pentapeptide)GlcNAc (lipid intermediate II). This is UDP-N-acetylglucosamine--N-acetylmuramyl-(pentapeptide) pyrophosphoryl-undecaprenol N-acetylglucosamine transferase from Moorella thermoacetica (strain ATCC 39073 / JCM 9320).